The following is a 338-amino-acid chain: Lipoate-protein ligase A (338 aa).

Positions 29–216 (PATQRVLFLW…AFFAHYGERI (188 aa)) constitute a BPL/LPL catalytic domain. Residues Arg-71, 76-79 (GAVF), and Lys-134 contribute to the ATP site. Lys-134 is a (R)-lipoate binding site.

It belongs to the LplA family. As to quaternary structure, monomer.

It localises to the cytoplasm. It catalyses the reaction L-lysyl-[lipoyl-carrier protein] + (R)-lipoate + ATP = N(6)-[(R)-lipoyl]-L-lysyl-[lipoyl-carrier protein] + AMP + diphosphate + H(+). The protein operates within protein modification; protein lipoylation via exogenous pathway; protein N(6)-(lipoyl)lysine from lipoate: step 1/2. It functions in the pathway protein modification; protein lipoylation via exogenous pathway; protein N(6)-(lipoyl)lysine from lipoate: step 2/2. Its function is as follows. Catalyzes both the ATP-dependent activation of exogenously supplied lipoate to lipoyl-AMP and the transfer of the activated lipoyl onto the lipoyl domains of lipoate-dependent enzymes. The polypeptide is Lipoate-protein ligase A (Salmonella paratyphi A (strain ATCC 9150 / SARB42)).